The chain runs to 500 residues: Probable cytosol aminopeptidase 1 (500 aa).

Lys-263 and Asp-268 together coordinate Mn(2+). Residue Lys-275 is part of the active site. Residues Asp-287, Asp-346, and Glu-348 each coordinate Mn(2+). Arg-350 is an active-site residue.

It belongs to the peptidase M17 family. The cofactor is Mn(2+).

The protein resides in the cytoplasm. It catalyses the reaction Release of an N-terminal amino acid, Xaa-|-Yaa-, in which Xaa is preferably Leu, but may be other amino acids including Pro although not Arg or Lys, and Yaa may be Pro. Amino acid amides and methyl esters are also readily hydrolyzed, but rates on arylamides are exceedingly low.. It carries out the reaction Release of an N-terminal amino acid, preferentially leucine, but not glutamic or aspartic acids.. Functionally, presumably involved in the processing and regular turnover of intracellular proteins. Catalyzes the removal of unsubstituted N-terminal amino acids from various peptides. This Shewanella oneidensis (strain ATCC 700550 / JCM 31522 / CIP 106686 / LMG 19005 / NCIMB 14063 / MR-1) protein is Probable cytosol aminopeptidase 1 (pepA1).